A 95-amino-acid chain; its full sequence is MSVSKKDVEYVAELARLEFKEEEKDSFVNDLNKILNYMEKLDELNTDDVDIVVNPYYIENKYREDNVEKSMELKEVIDNAPESLEEYVIVPKVID.

This sequence belongs to the GatC family. In terms of assembly, heterotrimer of A, B and C subunits.

The enzyme catalyses L-glutamyl-tRNA(Gln) + L-glutamine + ATP + H2O = L-glutaminyl-tRNA(Gln) + L-glutamate + ADP + phosphate + H(+). It carries out the reaction L-aspartyl-tRNA(Asn) + L-glutamine + ATP + H2O = L-asparaginyl-tRNA(Asn) + L-glutamate + ADP + phosphate + 2 H(+). Functionally, allows the formation of correctly charged Asn-tRNA(Asn) or Gln-tRNA(Gln) through the transamidation of misacylated Asp-tRNA(Asn) or Glu-tRNA(Gln) in organisms which lack either or both of asparaginyl-tRNA or glutaminyl-tRNA synthetases. The reaction takes place in the presence of glutamine and ATP through an activated phospho-Asp-tRNA(Asn) or phospho-Glu-tRNA(Gln). This is Aspartyl/glutamyl-tRNA(Asn/Gln) amidotransferase subunit C from Clostridium botulinum (strain ATCC 19397 / Type A).